A 454-amino-acid polypeptide reads, in one-letter code: UDP-N-acetylmuramate--L-alanine ligase (454 aa).

109–115 (GTHGKTT) contributes to the ATP binding site.

This sequence belongs to the MurCDEF family.

It is found in the cytoplasm. The enzyme catalyses UDP-N-acetyl-alpha-D-muramate + L-alanine + ATP = UDP-N-acetyl-alpha-D-muramoyl-L-alanine + ADP + phosphate + H(+). It functions in the pathway cell wall biogenesis; peptidoglycan biosynthesis. In terms of biological role, cell wall formation. This is UDP-N-acetylmuramate--L-alanine ligase from Protochlamydia amoebophila (strain UWE25).